A 346-amino-acid polypeptide reads, in one-letter code: Cyclin-dependent kinase 7 (346 aa).

A2 is subject to N-acetylalanine. At S7 the chain carries Phosphoserine. The Protein kinase domain maps to 12 to 295 (YEKLDFLGEG…ASQALKTKYF (284 aa)). Residues 18–26 (LGEGQFATV) and K41 contribute to the ATP site. Catalysis depends on D137, which acts as the Proton acceptor. Phosphoserine; by CDK1 and CDK2 is present on S164. T170 carries the post-translational modification Phosphothreonine; by CDK2.

Belongs to the protein kinase superfamily. CMGC Ser/Thr protein kinase family. CDC2/CDKX subfamily. Associates primarily with cyclin-H (CCNH) and MAT1 to form the CAK complex. CAK can further associate with the core-TFIIH to form the TFIIH basal transcription factor; this complex is sensitive to UV light. The CAK complex binds to p53/TP53 in response to DNA damage. Interacts with CDK2, SF1/NR5A1, PUF60 and PRKCI. Interacts with HINT1. Post-translationally, phosphorylation of Ser-164 during mitosis inactivates the enzyme. Phosphorylation of Thr-170 is required for activity. Phosphorylated at Ser-164 and Thr-170 by CDK2.

Its subcellular location is the nucleus. The protein resides in the cytoplasm. It localises to the perinuclear region. The enzyme catalyses L-seryl-[protein] + ATP = O-phospho-L-seryl-[protein] + ADP + H(+). It carries out the reaction L-threonyl-[protein] + ATP = O-phospho-L-threonyl-[protein] + ADP + H(+). It catalyses the reaction [DNA-directed RNA polymerase] + ATP = phospho-[DNA-directed RNA polymerase] + ADP + H(+). With respect to regulation, phosphorylation at Thr-170 is required for enzymatic activity. The association of p53/TP53 to the CAK complex in response to DNA damage reduces kinase activity toward CDK2 and RNA polymerase II repetitive C-terminal domain (CTD), thus stopping cell cycle progression. Functionally, serine/threonine kinase involved in cell cycle control and in RNA polymerase II-mediated RNA transcription. Cyclin-dependent kinases (CDKs) are activated by the binding to a cyclin and mediate the progression through the cell cycle. Each different complex controls a specific transition between 2 subsequent phases in the cell cycle. Required for both activation and complex formation of CDK1/cyclin-B during G2-M transition, and for activation of CDK2/cyclins during G1-S transition (but not complex formation). CDK7 is the catalytic subunit of the CDK-activating kinase (CAK) complex. Phosphorylates SPT5/SUPT5H, SF1/NR5A1, POLR2A, p53/TP53, CDK1, CDK2, CDK4, CDK6 and CDK11B/CDK11. Initiates transcription by RNA polymerase II by mediating phosphorylation of POLR2A at 'Ser-5' of the repetitive C-terminal domain (CTD) when POLR2A is in complex with DNA, promoting dissociation from DNA and initiation. CAK activates the cyclin-associated kinases CDK1, CDK2, CDK4 and CDK6 by threonine phosphorylation, thus regulating cell cycle progression. CAK complexed to the core-TFIIH basal transcription factor activates RNA polymerase II by serine phosphorylation of the CTD of POLR2A, allowing its escape from the promoter and elongation of the transcripts. Its expression and activity are constant throughout the cell cycle. Upon DNA damage, triggers p53/TP53 activation by phosphorylation, but is inactivated in turn by p53/TP53; this feedback loop may lead to an arrest of the cell cycle and of the transcription, helping in cell recovery, or to apoptosis. Required for DNA-bound peptides-mediated transcription and cellular growth inhibition. The polypeptide is Cyclin-dependent kinase 7 (Cdk7) (Mus musculus (Mouse)).